We begin with the raw amino-acid sequence, 156 residues long: Regulatory protein RecX (156 aa).

Belongs to the RecX family.

The protein resides in the cytoplasm. Modulates RecA activity. The polypeptide is Regulatory protein RecX (Pseudomonas putida (strain GB-1)).